Reading from the N-terminus, the 393-residue chain is Probable chromate transport protein (393 aa).

10 helical membrane-spanning segments follow: residues Tyr-22 to His-42, Ala-90 to Ala-110, Trp-119 to Ala-139, Thr-146 to Val-166, Phe-201 to Leu-221, Ala-231 to Val-251, Gln-261 to Gly-281, Phe-282 to Ile-302, Phe-327 to Gly-347, and Leu-370 to Phe-390.

It belongs to the chromate ion transporter (CHR) (TC 2.A.51) family.

It is found in the cell membrane. May function in the active transport of chromate into the cell under sulfur-deficient conditions. The chain is Probable chromate transport protein (srpC) from Synechococcus elongatus (strain ATCC 33912 / PCC 7942 / FACHB-805) (Anacystis nidulans R2).